The sequence spans 264 residues: Thymidylate synthase (264 aa).

Arginine 21 serves as a coordination point for dUMP. Histidine 51 lines the (6R)-5,10-methylene-5,6,7,8-tetrahydrofolate pocket. 126–127 (RR) serves as a coordination point for dUMP. Cysteine 146 (nucleophile) is an active-site residue. DUMP is bound by residues 166-169 (RSAD), asparagine 177, and 207-209 (HLY). Aspartate 169 lines the (6R)-5,10-methylene-5,6,7,8-tetrahydrofolate pocket. Alanine 263 provides a ligand contact to (6R)-5,10-methylene-5,6,7,8-tetrahydrofolate.

It belongs to the thymidylate synthase family. Bacterial-type ThyA subfamily. In terms of assembly, homodimer.

Its subcellular location is the cytoplasm. The enzyme catalyses dUMP + (6R)-5,10-methylene-5,6,7,8-tetrahydrofolate = 7,8-dihydrofolate + dTMP. The protein operates within pyrimidine metabolism; dTTP biosynthesis. Functionally, catalyzes the reductive methylation of 2'-deoxyuridine-5'-monophosphate (dUMP) to 2'-deoxythymidine-5'-monophosphate (dTMP) while utilizing 5,10-methylenetetrahydrofolate (mTHF) as the methyl donor and reductant in the reaction, yielding dihydrofolate (DHF) as a by-product. This enzymatic reaction provides an intracellular de novo source of dTMP, an essential precursor for DNA biosynthesis. The chain is Thymidylate synthase from Chelativorans sp. (strain BNC1).